Here is a 128-residue protein sequence, read N- to C-terminus: 14.7 kDa protein (128 aa).

The C4-type zinc finger occupies 65 to 94; the sequence is CFDCGAYLYDDHVCKRFTSRSNSDCLSVIH.

May act as a regulatory factor during viral transcription. The polypeptide is 14.7 kDa protein (Shallot virus X (ShVX)).